Here is a 305-residue protein sequence, read N- to C-terminus: MENKYTHGVLFYHEHSGLKNINQGIGEVTTALSSICKHLSIQLSENEGDIIKYCQEIKTKNYAKDVDILFILGGDGTVNELINGVMTHDLQLPIGILPGGTFNDFTKTLNIAPNHKQASEQMISAQVGTYDVIKINNQYALNFVGLGLIVQNAENVQDGSKDIFGKLSYIGSTVKTLLNPTQFNYQLSIDDKTYSGETTMILTANGPFIGGSRIPLTDLSPQDGELNTFIFNEQSFSILNDIFKKRDSMNWNEITQGIEHIPGKKISLTTDPAMKVDIDGEISLETPIDIEVIPNAIQLLTVNDL.

In terms of domain architecture, DAGKc spans 3 to 139 (NKYTHGVLFY…YDVIKINNQY (137 aa)). Residues S44, 74–80 (GDGTVNE), and T101 each bind ATP. Residues S220, D223, and E225 each coordinate Mg(2+). The active-site Proton acceptor is the E281.

The protein belongs to the diacylglycerol/lipid kinase family. Mg(2+) is required as a cofactor.

Functionally, may catalyze the ATP-dependent phosphorylation of lipids other than diacylglycerol (DAG). The chain is Putative lipid kinase USA300HOU_0749 from Staphylococcus aureus (strain USA300 / TCH1516).